The sequence spans 98 residues: Small ribosomal subunit protein bTHXm (98 aa).

Residues 1-35 (MAAMQWCGAMTRRIMMTQRTSAALNCSARYSSLSP) constitute a mitochondrion transit peptide. Positions 52–71 (DKKTKKGKRFKGSYGNSRGK) are disordered. Basic residues predominate over residues 53–62 (KKTKKGKRFK).

This sequence belongs to the bacterial ribosomal protein bTHX family. In terms of assembly, component of the mitochondrial ribosome small subunit.

The protein resides in the mitochondrion. The polypeptide is Small ribosomal subunit protein bTHXm (Arabidopsis thaliana (Mouse-ear cress)).